Reading from the N-terminus, the 1644-residue chain is Kinesin-like protein unc-104 (1644 aa).

One can recognise a Kinesin motor domain in the interval 3 to 351; sequence SVKVAVRVRP…LRYADRAKQI (349 aa). Position 97–104 (97–104) interacts with ATP; sequence GQTGAGKS. Positions 358–436 form a coiled coil; it reads NEDANAKLIR…IAELNETWEE (79 aa). The region spanning 499 to 565 is the FHA domain; that stretch reads TRLGTSEANV…LQTGSRVILG (67 aa). Over residues 574-591 the composition is skewed to basic and acidic residues; it reads HPEQAREKREKPKDKDVG. The segment at 574–598 is disordered; the sequence is HPEQAREKREKPKDKDVGENPGGNA. The stretch at 631-672 forms a coiled coil; sequence EQFKREKLAADQEFEEQRKTYEARIDALQKQVEEQSMTMSMY. 2 disordered regions span residues 953–985 and 1419–1440; these read EQEDADSGRGDSSVASELHESNEHEPGEHLQPG and HMVIPPSPQTPVKDQQTPTLPE. A compositionally biased stretch (basic and acidic residues) spans 969–984; it reads ELHESNEHEPGEHLQP. Polar residues predominate over residues 1428–1437; the sequence is TPVKDQQTPT. The PH domain maps to 1542–1640; sequence VVARKGYLNV…WLYAINPLLA (99 aa).

The protein belongs to the TRAFAC class myosin-kinesin ATPase superfamily. Kinesin family. Unc-104 subfamily. In terms of assembly, monomer.

The protein localises to the cytoplasm. It is found in the cytoskeleton. Its function is as follows. Required for presynaptic maturation, has a role in axonal transport of dense-core vesicles carrying synaptic vesicle precursors, components required for the morphological transformation of axonal growth cones to mature boutons. This Aedes aegypti (Yellowfever mosquito) protein is Kinesin-like protein unc-104.